The sequence spans 255 residues: tRNA (guanine-N(7)-)-methyltransferase (255 aa).

Residues Glu-86, Glu-111, Asp-138, and Asp-161 each contribute to the S-adenosyl-L-methionine site. Residue Asp-161 is part of the active site. Substrate contacts are provided by residues Lys-165, Asp-197, and 234 to 237; that span reads TKFE.

It belongs to the class I-like SAM-binding methyltransferase superfamily. TrmB family.

The enzyme catalyses guanosine(46) in tRNA + S-adenosyl-L-methionine = N(7)-methylguanosine(46) in tRNA + S-adenosyl-L-homocysteine. It functions in the pathway tRNA modification; N(7)-methylguanine-tRNA biosynthesis. Catalyzes the formation of N(7)-methylguanine at position 46 (m7G46) in tRNA. The sequence is that of tRNA (guanine-N(7)-)-methyltransferase from Pasteurella multocida (strain Pm70).